We begin with the raw amino-acid sequence, 125 residues long: Large ribosomal subunit protein bL12 (125 aa).

This sequence belongs to the bacterial ribosomal protein bL12 family. As to quaternary structure, homodimer. Part of the ribosomal stalk of the 50S ribosomal subunit. Forms a multimeric L10(L12)X complex, where L10 forms an elongated spine to which 2 to 4 L12 dimers bind in a sequential fashion. Binds GTP-bound translation factors.

Forms part of the ribosomal stalk which helps the ribosome interact with GTP-bound translation factors. Is thus essential for accurate translation. The chain is Large ribosomal subunit protein bL12 from Rickettsia prowazekii (strain Madrid E).